A 385-amino-acid chain; its full sequence is 5'-AMP-activated protein kinase catalytic subunit alpha-1 (385 aa).

Positions 1–229 constitute a Protein kinase domain; the sequence is DGRVKIGHYI…IKDIREHEWF (229 aa). Thr14 carries the post-translational modification Phosphothreonine. Residue 15 to 22 participates in ATP binding; that stretch reads LGVGTFGK. Asp100 (proton acceptor) is an active-site residue. Thr133 bears the Phosphothreonine; by LKB1 and CaMKK2 mark. Phosphothreonine is present on residues Thr219 and Thr276. The interval 252–297 is AIS; sequence EALKQDPLAVAYHLIIDNRDFYLATSPPDSFLDDHHLTRVPFLVAE. Ser277 carries the post-translational modification Phosphoserine. Residue Ser281 is modified to Phosphoserine; by ULK1. Position 289 is a phosphothreonine; by ULK1 (Thr289). Residue Thr298 is modified to Phosphothreonine. Phosphoserine is present on residues Ser353 and Ser383.

The protein belongs to the protein kinase superfamily. CAMK Ser/Thr protein kinase family. SNF1 subfamily. As to quaternary structure, AMPK is a heterotrimer of an alpha catalytic subunit (PRKAA1 or PRKAA2), a beta (PRKAB1 or PRKAB2) and a gamma non-catalytic subunits (PRKAG1, PRKAG2 or PRKAG3). Interacts with FNIP1 and FNIP2. The cofactor is Mg(2+). In terms of processing, ubiquitinated. Phosphorylated at Thr-133 by STK11/LKB1 in complex with STE20-related adapter-alpha (STRADA) pseudo kinase and CAB39. Also phosphorylated at Thr-133 by CAMKK2; triggered by a rise in intracellular calcium ions, without detectable changes in the AMP/ATP ratio. CAMKK1 can also phosphorylate Thr-133, but at a much lower level. Dephosphorylated by protein phosphatase 2A and 2C (PP2A and PP2C). Phosphorylated by ULK1 and ULK2; leading to negatively regulate AMPK activity and suggesting the existence of a regulatory feedback loop between ULK1, ULK2 and AMPK. Dephosphorylated by PPM1A and PPM1B. Post-translationally, glycosylated; O-GlcNAcylated by OGT, promoting the AMP-activated protein kinase (AMPK) activity.

The protein localises to the cytoplasm. Its subcellular location is the nucleus. It carries out the reaction L-seryl-[protein] + ATP = O-phospho-L-seryl-[protein] + ADP + H(+). It catalyses the reaction L-threonyl-[protein] + ATP = O-phospho-L-threonyl-[protein] + ADP + H(+). The catalysed reaction is L-seryl-[acetyl-CoA carboxylase] + ATP = O-phospho-L-seryl-[acetyl-CoA carboxylase] + ADP + H(+). The enzyme catalyses L-seryl-[3-hydroxy-3-methylglutaryl-coenzyme A reductase] + ATP = O-phospho-L-seryl-[3-hydroxy-3-methylglutaryl-coenzyme A reductase] + ADP + H(+). It carries out the reaction L-seryl-[tau protein] + ATP = O-phospho-L-seryl-[tau protein] + ADP + H(+). It catalyses the reaction L-threonyl-[tau protein] + ATP = O-phospho-L-threonyl-[tau protein] + ADP + H(+). Activated by phosphorylation on Thr-133. Binding of AMP to non-catalytic gamma subunit (PRKAG1, PRKAG2 or PRKAG3) results in allosteric activation, inducing phosphorylation on Thr-133. AMP-binding to gamma subunit also sustains activity by preventing dephosphorylation of Thr-133. ADP also stimulates Thr-133 phosphorylation, without stimulating already phosphorylated AMPK. ATP promotes dephosphorylation of Thr-133, rendering the enzyme inactive. Under physiological conditions AMPK mainly exists in its inactive form in complex with ATP, which is much more abundant than AMP. Selectively inhibited by compound C (6-[4-(2-Piperidin-1-yl-ethoxy)-phenyl)]-3-pyridin-4-yl-pyyrazolo[1,5-a] pyrimidine. Activated by resveratrol, a natural polyphenol present in red wine, and S17834, a synthetic polyphenol. In terms of biological role, catalytic subunit of AMP-activated protein kinase (AMPK), an energy sensor protein kinase that plays a key role in regulating cellular energy metabolism. In response to reduction of intracellular ATP levels, AMPK activates energy-producing pathways and inhibits energy-consuming processes: inhibits protein, carbohydrate and lipid biosynthesis, as well as cell growth and proliferation. AMPK acts via direct phosphorylation of metabolic enzymes, and by longer-term effects via phosphorylation of transcription regulators. Regulates lipid synthesis by phosphorylating and inactivating lipid metabolic enzymes such as ACACA, ACACB, GYS1, HMGCR and LIPE; regulates fatty acid and cholesterol synthesis by phosphorylating acetyl-CoA carboxylase (ACACA and ACACB) and hormone-sensitive lipase (LIPE) enzymes, respectively. Promotes lipolysis of lipid droplets by mediating phosphorylation of isoform 1 of CHKA (CHKalpha2). Regulates insulin-signaling and glycolysis by phosphorylating IRS1, PFKFB2 and PFKFB3. AMPK stimulates glucose uptake in muscle by increasing the translocation of the glucose transporter SLC2A4/GLUT4 to the plasma membrane, possibly by mediating phosphorylation of TBC1D4/AS160. Regulates transcription and chromatin structure by phosphorylating transcription regulators involved in energy metabolism such as CRTC2/TORC2, FOXO3, histone H2B, HDAC5, MEF2C, MLXIPL/ChREBP, EP300, HNF4A, p53/TP53, SREBF1, SREBF2 and PPARGC1A. Acts as a key regulator of glucose homeostasis in liver by phosphorylating CRTC2/TORC2, leading to CRTC2/TORC2 sequestration in the cytoplasm. In response to stress, phosphorylates 'Ser-36' of histone H2B (H2BS36ph), leading to promote transcription. Acts as a key regulator of cell growth and proliferation by phosphorylating FNIP1, TSC2, RPTOR, WDR24 and ATG1/ULK1: in response to nutrient limitation, negatively regulates the mTORC1 complex by phosphorylating RPTOR component of the mTORC1 complex and by phosphorylating and activating TSC2. Also phosphorylates and inhibits GATOR2 subunit WDR24 in response to nutrient limitation, leading to suppress glucose-mediated mTORC1 activation. In response to energetic stress, phosphorylates FNIP1, inactivating the non-canonical mTORC1 signaling, thereby promoting nuclear translocation of TFEB and TFE3, and inducing transcription of lysosomal or autophagy genes. In response to nutrient limitation, promotes autophagy by phosphorylating and activating ATG1/ULK1. In that process also activates WDR45/WIPI4. Phosphorylates CASP6, thereby preventing its autoprocessing and subsequent activation. In response to nutrient limitation, phosphorylates transcription factor FOXO3 promoting FOXO3 mitochondrial import. Also acts as a regulator of cellular polarity by remodeling the actin cytoskeleton; probably by indirectly activating myosin. AMPK also acts as a regulator of circadian rhythm by mediating phosphorylation of CRY1, leading to destabilize it. May regulate the Wnt signaling pathway by phosphorylating CTNNB1, leading to stabilize it. Also has tau-protein kinase activity: in response to amyloid beta A4 protein (APP) exposure, activated by CAMKK2, leading to phosphorylation of MAPT/TAU; however the relevance of such data remains unclear in vivo. Also phosphorylates CFTR, EEF2K, KLC1, NOS3 and SLC12A1. Regulates hepatic lipogenesis. Activated via SIRT3, represses sterol regulatory element-binding protein (SREBP) transcriptional activities and ATP-consuming lipogenesis to restore cellular energy balance. Upon stress, regulates mitochondrial fragmentation through phosphorylation of MTFR1L. The polypeptide is 5'-AMP-activated protein kinase catalytic subunit alpha-1 (PRKAA1) (Sus scrofa (Pig)).